Reading from the N-terminus, the 262-residue chain is Carbohydrate deacetylase (262 aa).

H129 contributes to the Mg(2+) binding site.

It belongs to the YdjC deacetylase family. In terms of assembly, homodimer. Requires Mg(2+) as cofactor.

Probably catalyzes the deacetylation of acetylated carbohydrates an important step in the degradation of oligosaccharides. The sequence is that of Carbohydrate deacetylase from Enterococcus faecalis (strain ATCC 700802 / V583).